A 359-amino-acid chain; its full sequence is S-adenosylmethionine-dependent nucleotide dehydratase RSAD2 (359 aa).

The tract at residues 43–67 (QTPARKISRPESRTSKQKEGSRAPF) is disordered. Over residues 50 to 63 (SRPESRTSKQKEGS) the composition is skewed to basic and acidic residues. The 221-residue stretch at 67–287 (FTTPSSVNYH…LERHQSIQCL (221 aa)) folds into the Radical SAM core domain. Residues Cys-81, Cys-85, and Cys-88 each coordinate [4Fe-4S] cluster.

It belongs to the radical SAM superfamily. RSAD2 family. It depends on [4Fe-4S] cluster as a cofactor.

It is found in the endoplasmic reticulum membrane. Interferon-inducible iron-sulfur (4FE-4S) cluster-binding antiviral protein which plays a major role in the cell antiviral state induced by type I and type II interferon. In Danio rerio (Zebrafish), this protein is S-adenosylmethionine-dependent nucleotide dehydratase RSAD2.